We begin with the raw amino-acid sequence, 505 residues long: Maturase K (505 aa).

The protein belongs to the intron maturase 2 family. MatK subfamily.

Its subcellular location is the plastid. The protein localises to the chloroplast. Functionally, usually encoded in the trnK tRNA gene intron. Probably assists in splicing its own and other chloroplast group II introns. The polypeptide is Maturase K (Portulacaria afra (Elephant's food)).